The sequence spans 280 residues: Pantothenate synthetase (280 aa).

31–38 (MGNLHAGH) provides a ligand contact to ATP. Histidine 38 (proton donor) is an active-site residue. Position 62 (glutamine 62) interacts with (R)-pantoate. Glutamine 62 lines the beta-alanine pocket. 150 to 153 (GKKD) contributes to the ATP binding site. Residue glutamine 156 coordinates (R)-pantoate. ATP-binding positions include valine 179 and 187–190 (MSSR).

It belongs to the pantothenate synthetase family. As to quaternary structure, homodimer.

The protein localises to the cytoplasm. It catalyses the reaction (R)-pantoate + beta-alanine + ATP = (R)-pantothenate + AMP + diphosphate + H(+). Its pathway is cofactor biosynthesis; (R)-pantothenate biosynthesis; (R)-pantothenate from (R)-pantoate and beta-alanine: step 1/1. Catalyzes the condensation of pantoate with beta-alanine in an ATP-dependent reaction via a pantoyl-adenylate intermediate. This Xanthomonas axonopodis pv. citri (strain 306) protein is Pantothenate synthetase.